We begin with the raw amino-acid sequence, 96 residues long: Large ribosomal subunit protein bL28 (96 aa).

Positions 1–24 (MSRSCELTGKGVQSGHNVSHANNK) are disordered.

It belongs to the bacterial ribosomal protein bL28 family.

This chain is Large ribosomal subunit protein bL28, found in Sinorhizobium fredii (strain NBRC 101917 / NGR234).